The chain runs to 582 residues: Peptidyl-prolyl cis-trans isomerase FKBP10 (582 aa).

Residues M1 to A26 form the signal peptide. PPIase FKBP-type domains follow at residues G62–W150, G174–H262, and G286–H374. Residues N70, N182, N294, N310, N352, N393, and N407 are each glycosylated (N-linked (GlcNAc...) asparagine). In terms of domain architecture, PPIase FKBP-type 4 spans G399–E486. 2 consecutive EF-hand domains span residues W497–E532 and D542–R577. Ca(2+) contacts are provided by D510, N512, D514, E516, E521, D555, N557, D559, K561, and E566. Residues G533–L582 are disordered. Residues R556–L582 are compositionally biased toward basic and acidic residues. Positions H579 to L582 match the Prevents secretion from ER motif.

Post-translationally, glycosylated and phosphorylated.

It is found in the endoplasmic reticulum lumen. It carries out the reaction [protein]-peptidylproline (omega=180) = [protein]-peptidylproline (omega=0). Its activity is regulated as follows. Inhibited by both FK506 and rapamycin, but not by cyclosporin A. Functionally, PPIases accelerate the folding of proteins during protein synthesis. The chain is Peptidyl-prolyl cis-trans isomerase FKBP10 (FKBP10) from Homo sapiens (Human).